Consider the following 602-residue polypeptide: Sulfite reductase [NADPH] flavoprotein alpha-component (602 aa).

The 139-residue stretch at 68 to 206 (ITIISASQTG…NYIQWSEELL (139 aa)) folds into the Flavodoxin-like domain. Residues 74-79 (SQTGNA), 121-124 (STQG), and 157-166 (LGDVSYNLFC) each bind FMN. The FAD-binding FR-type domain occupies 237-451 (YKPAVATVLL…VEEKSNFRLP (215 aa)). FAD is bound by residues T325, K359, 389 to 392 (RLYS), 407 to 409 (TVG), and 422 to 425 (GGSS). NADP(+) contacts are provided by residues 522 to 523 (SR), 528 to 532 (KIYVQ), and D564. Y602 provides a ligand contact to FAD.

The protein belongs to the NADPH-dependent sulphite reductase flavoprotein subunit CysJ family. This sequence in the N-terminal section; belongs to the flavodoxin family. In the C-terminal section; belongs to the flavoprotein pyridine nucleotide cytochrome reductase family. Alpha(8)-beta(8). The alpha component is a flavoprotein, the beta component is a hemoprotein. The cofactor is FAD. FMN is required as a cofactor.

It catalyses the reaction hydrogen sulfide + 3 NADP(+) + 3 H2O = sulfite + 3 NADPH + 4 H(+). The protein operates within sulfur metabolism; hydrogen sulfide biosynthesis; hydrogen sulfide from sulfite (NADPH route): step 1/1. Functionally, component of the sulfite reductase complex that catalyzes the 6-electron reduction of sulfite to sulfide. This is one of several activities required for the biosynthesis of L-cysteine from sulfate. The flavoprotein component catalyzes the electron flow from NADPH -&gt; FAD -&gt; FMN to the hemoprotein component. This chain is Sulfite reductase [NADPH] flavoprotein alpha-component, found in Buchnera aphidicola subsp. Schizaphis graminum (strain Sg).